We begin with the raw amino-acid sequence, 513 residues long: ATP synthase subunit alpha (513 aa).

ATP is bound at residue 169–176 (GDRQTGKT).

It belongs to the ATPase alpha/beta chains family. In terms of assembly, F-type ATPases have 2 components, CF(1) - the catalytic core - and CF(0) - the membrane proton channel. CF(1) has five subunits: alpha(3), beta(3), gamma(1), delta(1), epsilon(1). CF(0) has three main subunits: a(1), b(2) and c(9-12). The alpha and beta chains form an alternating ring which encloses part of the gamma chain. CF(1) is attached to CF(0) by a central stalk formed by the gamma and epsilon chains, while a peripheral stalk is formed by the delta and b chains.

The protein localises to the cell inner membrane. It catalyses the reaction ATP + H2O + 4 H(+)(in) = ADP + phosphate + 5 H(+)(out). Produces ATP from ADP in the presence of a proton gradient across the membrane. The alpha chain is a regulatory subunit. This is ATP synthase subunit alpha from Bordetella petrii (strain ATCC BAA-461 / DSM 12804 / CCUG 43448).